The primary structure comprises 423 residues: Imidazolonepropionase (423 aa).

Fe(3+) is bound by residues His78 and His80. Zn(2+)-binding residues include His78 and His80. 3 residues coordinate 4-imidazolone-5-propanoate: Arg87, Tyr150, and His183. Tyr150 contacts N-formimidoyl-L-glutamate. His247 serves as a coordination point for Fe(3+). His247 is a binding site for Zn(2+). A 4-imidazolone-5-propanoate-binding site is contributed by Glu250. A Fe(3+)-binding site is contributed by Asp322. Asp322 contacts Zn(2+). N-formimidoyl-L-glutamate contacts are provided by Asn324 and Gly326. Ser327 lines the 4-imidazolone-5-propanoate pocket.

The protein belongs to the metallo-dependent hydrolases superfamily. HutI family. The cofactor is Zn(2+). Fe(3+) serves as cofactor.

Its subcellular location is the cytoplasm. The enzyme catalyses 4-imidazolone-5-propanoate + H2O = N-formimidoyl-L-glutamate. Its pathway is amino-acid degradation; L-histidine degradation into L-glutamate; N-formimidoyl-L-glutamate from L-histidine: step 3/3. Catalyzes the hydrolytic cleavage of the carbon-nitrogen bond in imidazolone-5-propanoate to yield N-formimidoyl-L-glutamate. It is the third step in the universal histidine degradation pathway. The chain is Imidazolonepropionase from Bacillus thuringiensis (strain Al Hakam).